Consider the following 242-residue polypeptide: Large ribosomal subunit protein uL1 (242 aa).

It belongs to the universal ribosomal protein uL1 family. Part of the 50S ribosomal subunit.

Functionally, binds directly to 23S rRNA. The L1 stalk is quite mobile in the ribosome, and is involved in E site tRNA release. Protein L1 is also a translational repressor protein, it controls the translation of the L11 operon by binding to its mRNA. The protein is Large ribosomal subunit protein uL1 of Streptomyces sp. (strain FRI-5).